Consider the following 559-residue polypeptide: Thermosome subunit alpha (559 aa).

A compositionally biased stretch (basic and acidic residues) spans 535 to 547 (SEKKGGEGSKEES). The disordered stretch occupies residues 535-559 (SEKKGGEGSKEESGGEGGSTPSLGD).

It belongs to the TCP-1 chaperonin family. Forms a Heterooligomeric complex of two stacked eight-membered rings.

Its function is as follows. Molecular chaperone; binds unfolded polypeptides in vitro, and has a weak ATPase activity. In Saccharolobus solfataricus (strain ATCC 35092 / DSM 1617 / JCM 11322 / P2) (Sulfolobus solfataricus), this protein is Thermosome subunit alpha (thsA).